We begin with the raw amino-acid sequence, 281 residues long: 2-hydroxymuconate semialdehyde hydrolase (281 aa).

The segment at 30–55 (FPALLIHGSGPASPPGPTGAGSFRSS) is disordered. The AB hydrolase-1 domain occupies 31–261 (PALLIHGSGP…QCGHWTQIEH (231 aa)). Active-site residues include S106, D227, and H255.

Belongs to the DmpD/TodF/XylF esterase family.

It carries out the reaction (2Z,4E)-2-hydroxy-6-oxohexa-2,4-dienoate + H2O = 2-oxopent-4-enoate + formate + H(+). It participates in aromatic compound metabolism; benzoate degradation via hydroxylation. Catalyzes the conversion of 2-hydroxymuconate semialdehyde to 2-hydroxypent-2,4-dienoate. This Pseudomonas putida (Arthrobacter siderocapsulatus) protein is 2-hydroxymuconate semialdehyde hydrolase (xylF).